The chain runs to 290 residues: Transposon Ty3-G Gag polyprotein (290 aa).

The residue at position 2 (serine 2) is an N-acetylserine. The CCHC-type zinc finger occupies 265 to 282 (RLCFYCKKEGHRLNECRA).

Its subcellular location is the cytoplasm. Capsid protein (CA) is the structural component of the virus-like particle (VLP), forming the shell that encapsulates the retrotransposons dimeric RNA genome. Functionally, nucleocapsid protein p9 (NC) forms the nucleocore that coats the retro-elements dimeric RNA. Binds these RNAs through its zinc fingers. Promotes primer tRNA(i)-Met annealing to the multipartite primer-binding site (PBS), dimerization of Ty3 RNA and initiation of reverse transcription. The chain is Transposon Ty3-G Gag polyprotein (TY3A-G) from Saccharomyces cerevisiae (strain ATCC 204508 / S288c) (Baker's yeast).